The following is a 103-amino-acid chain: N(4)-acetylcytidine amidohydrolase (103 aa).

The region spanning 6-92 (TFFERFEPGI…VIQEIYPGLE (87 aa)) is the ASCH domain. The active-site Proton acceptor is lysine 20. Residue threonine 23 is the Nucleophile of the active site. Residue glutamate 73 is the Proton donor of the active site.

Belongs to the N(4)-acetylcytidine amidohydrolase family.

The catalysed reaction is N(4)-acetylcytidine + H2O = cytidine + acetate + H(+). It carries out the reaction N(4)-acetyl-2'-deoxycytidine + H2O = 2'-deoxycytidine + acetate + H(+). The enzyme catalyses N(4)-acetylcytosine + H2O = cytosine + acetate + H(+). Its function is as follows. Catalyzes the hydrolysis of N(4)-acetylcytidine (ac4C). The polypeptide is N(4)-acetylcytidine amidohydrolase (Shewanella sp. (strain MR-7)).